The following is a 468-amino-acid chain: 6-phospho-beta-galactosidase (468 aa).

D-galactose 6-phosphate-binding residues include Gln-19, His-116, Asn-159, Glu-160, and Asn-297. Glu-160 acts as the Proton donor in catalysis. The active-site Nucleophile is Glu-375. The D-galactose 6-phosphate site is built by Ser-428, Trp-429, Lys-435, and Tyr-437.

It belongs to the glycosyl hydrolase 1 family.

The catalysed reaction is a 6-phospho-beta-D-galactoside + H2O = D-galactose 6-phosphate + an alcohol. The protein operates within carbohydrate metabolism; lactose degradation; D-galactose 6-phosphate and beta-D-glucose from lactose 6-phosphate: step 1/1. This chain is 6-phospho-beta-galactosidase, found in Streptococcus pyogenes serotype M3 (strain ATCC BAA-595 / MGAS315).